We begin with the raw amino-acid sequence, 518 residues long: Myosin-binding protein 7 (518 aa).

The region spanning 69–167 (NELELLRETV…ALTFEAQAYK (99 aa)) is the GTD-binding domain. The disordered stretch occupies residues 276 to 350 (VVGQSPRHQR…DSSEIGDNDM (75 aa)). Residues 291–301 (STGSASSLLGT) are compositionally biased toward low complexity. Polar residues predominate over residues 310–320 (SNDSPRSNNGS). Ser385 bears the Phosphoserine mark. Residues 399–431 (EISKLYMRLQALEADRESMRQAIMSMRTEKAQM) are a coiled coil. The helical transmembrane segment at 458-477 (IIGAFNFISVFKWITSFVFW) threads the bilayer.

In terms of assembly, interacts with myosin XI-I.

Its subcellular location is the endomembrane system. Its function is as follows. Membrane-anchored myosin receptors that define a distinct, plant-specific transport vesicle compartment. In Arabidopsis thaliana (Mouse-ear cress), this protein is Myosin-binding protein 7.